A 258-amino-acid polypeptide reads, in one-letter code: 14-3-3 protein homolog (258 aa).

Belongs to the 14-3-3 family.

This chain is 14-3-3 protein homolog, found in Encephalitozoon cuniculi (strain GB-M1) (Microsporidian parasite).